We begin with the raw amino-acid sequence, 313 residues long: Olfactory receptor 4Q3 (313 aa).

Over M1–L25 the chain is Extracellular. Residue N8 is glycosylated (N-linked (GlcNAc...) asparagine). The helical transmembrane segment at F26–V49 threads the bilayer. Residues Q50–S58 are Cytoplasmic-facing. The helical transmembrane segment at P59–P80 threads the bilayer. Over K81–Q101 the chain is Extracellular. An intrachain disulfide couples C98 to C190. A helical transmembrane segment spans residues I102–Y121. Residues D122–Q140 are Cytoplasmic-facing. A helical transmembrane segment spans residues L141–M159. Over Q160 to V196 the chain is Extracellular. A helical membrane pass occupies residues E197–A220. Residues I221 to K236 are Cytoplasmic-facing. A helical membrane pass occupies residues V237–Y259. The Extracellular portion of the chain corresponds to L260–K270. A helical transmembrane segment spans residues I271–L290. Residues R291–C313 are Cytoplasmic-facing.

The protein belongs to the G-protein coupled receptor 1 family.

The protein localises to the cell membrane. Functionally, odorant receptor. The polypeptide is Olfactory receptor 4Q3 (OR4Q3) (Homo sapiens (Human)).